A 491-amino-acid polypeptide reads, in one-letter code: Carbohydrate ABC transporter substrate-binding protein (491 aa).

The Zn(2+) site is built by aspartate 212, histidine 247, histidine 252, and glutamate 256.

Belongs to the bacterial solute-binding protein 1 family. Exists as a monomer, homodimer, homotrimer and homotetramer; oligomerization increases with higher protein concentration.

The protein localises to the cell surface. Probably part of an ABC transporter complex involved in carbohydrate transport. The sequence is that of Carbohydrate ABC transporter substrate-binding protein from Streptococcus pneumoniae serotype 4 (strain ATCC BAA-334 / TIGR4).